We begin with the raw amino-acid sequence, 296 residues long: GTPase Era (296 aa).

The region spanning Lys7–Glu174 is the Era-type G domain. Positions Gly15 to Ser22 are G1. GTP is bound at residue Gly15–Ser22. Residues Gln41 to His45 are G2. Residues Asp62–Gly65 form a G3 region. GTP is bound by residues Asp62 to Phe66 and Asn123 to Asp126. The G4 stretch occupies residues Asn123–Asp126. A G5 region spans residues Val153–Ala155. In terms of domain architecture, KH type-2 spans Ile205–Ser281.

It belongs to the TRAFAC class TrmE-Era-EngA-EngB-Septin-like GTPase superfamily. Era GTPase family. As to quaternary structure, monomer.

It is found in the cytoplasm. The protein localises to the cell inner membrane. Its function is as follows. An essential GTPase that binds both GDP and GTP, with rapid nucleotide exchange. Plays a role in 16S rRNA processing and 30S ribosomal subunit biogenesis and possibly also in cell cycle regulation and energy metabolism. The sequence is that of GTPase Era from Nitrosomonas eutropha (strain DSM 101675 / C91 / Nm57).